The sequence spans 670 residues: UvrABC system protein B (670 aa).

The Helicase ATP-binding domain occupies 26–183; the sequence is EGLENGLAHQ…RRLSELQYSR (158 aa). 39–46 lines the ATP pocket; it reads GVTGSGKT. A Beta-hairpin motif is present at residues 92–115; it reads YYDYYQPEAYVPSSDTFIEKDASV. The Helicase C-terminal domain occupies 431-597; sequence QVDDLLSEIR…GLNKKIGDIL (167 aa). The disordered stretch occupies residues 600-620; the sequence is GQPSTRGKGKGRGGKVADTNN. The UVR domain occupies 630–665; it reads DQKIRELEAKMYTHAQNLEFEQAAELRDQVHQLRQQ.

The protein belongs to the UvrB family. Forms a heterotetramer with UvrA during the search for lesions. Interacts with UvrC in an incision complex.

The protein localises to the cytoplasm. Functionally, the UvrABC repair system catalyzes the recognition and processing of DNA lesions. A damage recognition complex composed of 2 UvrA and 2 UvrB subunits scans DNA for abnormalities. Upon binding of the UvrA(2)B(2) complex to a putative damaged site, the DNA wraps around one UvrB monomer. DNA wrap is dependent on ATP binding by UvrB and probably causes local melting of the DNA helix, facilitating insertion of UvrB beta-hairpin between the DNA strands. Then UvrB probes one DNA strand for the presence of a lesion. If a lesion is found the UvrA subunits dissociate and the UvrB-DNA preincision complex is formed. This complex is subsequently bound by UvrC and the second UvrB is released. If no lesion is found, the DNA wraps around the other UvrB subunit that will check the other stand for damage. In Yersinia enterocolitica serotype O:8 / biotype 1B (strain NCTC 13174 / 8081), this protein is UvrABC system protein B.